Here is a 233-residue protein sequence, read N- to C-terminus: Biosynthetic peptidoglycan transglycosylase (233 aa).

A helical membrane pass occupies residues 8–28 (LIALPVGIFIFFNAYVYGNII).

Belongs to the glycosyltransferase 51 family.

It is found in the cell inner membrane. It catalyses the reaction [GlcNAc-(1-&gt;4)-Mur2Ac(oyl-L-Ala-gamma-D-Glu-L-Lys-D-Ala-D-Ala)](n)-di-trans,octa-cis-undecaprenyl diphosphate + beta-D-GlcNAc-(1-&gt;4)-Mur2Ac(oyl-L-Ala-gamma-D-Glu-L-Lys-D-Ala-D-Ala)-di-trans,octa-cis-undecaprenyl diphosphate = [GlcNAc-(1-&gt;4)-Mur2Ac(oyl-L-Ala-gamma-D-Glu-L-Lys-D-Ala-D-Ala)](n+1)-di-trans,octa-cis-undecaprenyl diphosphate + di-trans,octa-cis-undecaprenyl diphosphate + H(+). It functions in the pathway cell wall biogenesis; peptidoglycan biosynthesis. In terms of biological role, peptidoglycan polymerase that catalyzes glycan chain elongation from lipid-linked precursors. The chain is Biosynthetic peptidoglycan transglycosylase from Neisseria meningitidis serogroup B (strain ATCC BAA-335 / MC58).